A 341-amino-acid chain; its full sequence is Barley B recombinant-like protein A (341 aa).

Residues 48–62 (HQHQQHVPHHHHQPH) show a composition bias toward basic residues. 2 disordered regions span residues 48-95 (HQHQ…MNFA) and 150-234 (MQQQ…RKNI). The span at 68–77 (GANGNANGGA) shows a compositional bias: low complexity. The segment covering 78 to 90 (MPPPPATEAPPSM) has biased composition (pro residues). Residues 190-211 (PKKRQQGRQPKVPRAKKPKKSA) show a composition bias toward basic residues.

This sequence belongs to the BBR/BPC family.

It localises to the nucleus. In terms of biological role, transcriptional regulator that specifically binds to GA-rich elements (GAGA-repeats) present in regulatory sequences of genes involved in developmental processes. The chain is Barley B recombinant-like protein A from Oryza sativa subsp. japonica (Rice).